A 694-amino-acid polypeptide reads, in one-letter code: MAPGSRSWGAVLLLAAMLPAACGSCGADGGPLEPFDALYASGVEAYYGGDFAGAARCLEQALRSRRELRAERLRCRRRCRGQVRLAALGAGPAGELPFFGALLRRAGCLRSCEEPRLGAASRHRAAEEVRSDFQRRVPYSYLQRAYIQLNKLEEAANAAHTFFMANPEHMEIQQDIENYKTTAGKVSLIDLEAKPHMEDYSAGVRHYDKEEYGLAITFLERALEGYYAEDEDCQIMCEGPQRFEEHEYLEYKAGLYEAIADHYMQVLACKHDCIRELATRSGRISPIENFLPLHYDYLQFAYYRVGDYVKALECARSYLLFHPDDEDVLENAAYYEGLLEGTVDPATIKPRKEAKALLRRHKLESHLLRVAAVGLGFTYTEPNYWKRYGARQDEHSVPSSISSEPEDGPRLSLTKKPTPKPDRELKEGGPLLYSDVKFVYNSQQLNGTQRVLLDNVISEEQCRELHRVASGIMLAGDGYRGKTSPHTPNERFEGATVLKALKYGYEGRVPLKSARLFYDISEKARRIVESYFMLNSTLYFSYTHLVCRTALSGQQERRNDLSHPIHADNCLLDPEANECWKEPPAYTFRDYSALLYMNADFEGGEFIFTEMDAKTVTASIKPKCGRMVSFSSGGENPHGVKAVTKGQRCAVALWFTLDPLYRELERIQADEVIAMLDQEHVGRSEMNINPKDEL.

The signal sequence occupies residues 1-23 (MAPGSRSWGAVLLLAAMLPAACG). 4 TPR repeats span residues 35 to 68 (FDAL…RREL), 136 to 169 (RVPY…NPEH), 196 to 229 (HMED…YYAE), and 292 to 325 (PLHY…HPDD). Residues 386-418 (KRYGARQDEHSVPSSISSEPEDGPRLSLTKKPT) adopt a coiled-coil conformation. Residues 395-427 (HSVPSSISSEPEDGPRLSLTKKPTPKPDRELKE) are disordered. Asparagine 446 and asparagine 535 each carry an N-linked (GlcNAc...) asparagine glycan. Residues 543–657 (THLVCRTALS…RCAVALWFTL (115 aa)) enclose the Fe2OG dioxygenase domain. Histidine 566, aspartate 568, and histidine 638 together coordinate Fe cation. Residue arginine 648 is part of the active site. The short motif at 691–694 (KDEL) is the Prevents secretion from ER element.

It belongs to the leprecan family. The cofactor is Fe cation. L-ascorbate serves as cofactor.

The protein resides in the endoplasmic reticulum. It localises to the sarcoplasmic reticulum. The protein localises to the golgi apparatus. The catalysed reaction is L-prolyl-[collagen] + 2-oxoglutarate + O2 = trans-3-hydroxy-L-prolyl-[collagen] + succinate + CO2. In terms of biological role, prolyl 3-hydroxylase that catalyzes the post-translational formation of 3-hydroxyproline on collagens. Contributes to proline 3-hydroxylation of collagen COL4A1 and COL1A1 in tendons, the eye sclera and in the eye lens capsule. Has high activity with the type IV collagen COL4A1, and lower activity with COL1A1. Catalyzes hydroxylation of the first Pro in Gly-Pro-Hyp sequences where Hyp is 4-hydroxyproline. Has no activity on substrates that lack 4-hydroxyproline in the third position. The chain is Prolyl 3-hydroxylase 2 from Gallus gallus (Chicken).